The following is a 69-amino-acid chain: MEAEIWGRRIRAFRKLKGYTQEGFAKALGISVSILGEIERGNRLPSAAIIQDAADVLNISADELAPPEK.

The HTH cro/C1-type domain maps to 10 to 64; it reads IRAFRKLKGYTQEGFAKALGISVSILGEIERGNRLPSAAIIQDAADVLNISADEL. Residues 21 to 40 constitute a DNA-binding region (H-T-H motif); it reads QEGFAKALGISVSILGEIER.

This is an uncharacterized protein from Bacillus subtilis (strain 168).